Reading from the N-terminus, the 314-residue chain is L-lactate dehydrogenase (314 aa).

NAD(+) contacts are provided by residues Val17, Asp38, Lys43, Tyr69, and 83 to 84 (GA). Substrate contacts are provided by Gln86 and Arg92. NAD(+)-binding positions include Ser105, 122 to 124 (ASN), and Ser147. A substrate-binding site is contributed by 124 to 127 (NPVD). 152 to 155 (DSAR) lines the substrate pocket. Positions 157 and 172 each coordinate beta-D-fructose 1,6-bisphosphate. His179 serves as the catalytic Proton acceptor. Tyr223 carries the phosphotyrosine modification. Thr232 contributes to the substrate binding site.

This sequence belongs to the LDH/MDH superfamily. LDH family. In terms of assembly, homotetramer.

It is found in the cytoplasm. It carries out the reaction (S)-lactate + NAD(+) = pyruvate + NADH + H(+). It functions in the pathway fermentation; pyruvate fermentation to lactate; (S)-lactate from pyruvate: step 1/1. Allosterically activated by fructose 1,6-bisphosphate (FBP). Catalyzes the conversion of lactate to pyruvate. In Corynebacterium glutamicum (strain R), this protein is L-lactate dehydrogenase.